A 949-amino-acid chain; its full sequence is ATPase 6, plasma membrane-type (949 aa).

Residues 1–64 are Cytoplasmic-facing; that stretch reads MAADISWDEI…EKVENKFLKF (64 aa). A helical transmembrane segment spans residues 65–84; it reads LGFMWNPLSWVMEAAAIMAI. Over 85-96 the chain is Extracellular; the sequence is VLANGGGRPPDW. The helical transmembrane segment at 97–117 threads the bilayer; that stretch reads QDFVGITCLLIINSTISFIEE. Residues 118–246 lie on the Cytoplasmic side of the membrane; the sequence is NNAGNAAAAL…GHFQKVLTAI (129 aa). A helical transmembrane segment spans residues 247-267; it reads GNFCICSIGIGMLIEIIIMYP. Residues 268 to 276 are Extracellular-facing; it reads IQHRKYRDG. A helical membrane pass occupies residues 277-294; sequence IDNLLVLLIGGIPIAMPT. The Cytoplasmic portion of the chain corresponds to 295-645; that stretch reads VLSVTMAIGS…TSRAIFQRMK (351 aa). Asp332 (4-aspartylphosphate intermediate) is an active-site residue. Positions 590 and 594 each coordinate Mg(2+). A helical membrane pass occupies residues 646–667; it reads NYTIYAVSITIRIVLGFMLVAL. The Extracellular segment spans residues 668–672; that stretch reads IWEFD. The chain crosses the membrane as a helical span at residues 673–695; it reads FSPFMVLIIAILNDGTIMTISKD. The Cytoplasmic portion of the chain corresponds to 696–711; it reads RVKPSPIPDSWKLKEI. The helical transmembrane segment at 712–732 threads the bilayer; it reads FATGVVLGTYMALVTVVFFWL. At 733 to 753 the chain is on the extracellular side; that stretch reads AHDTTFFSDKFGVRSLQGKDE. The helical transmembrane segment at 754–774 threads the bilayer; that stretch reads ELIAVLYLQVSIISQALIFVT. The Cytoplasmic portion of the chain corresponds to 775–786; it reads RSRSWSFVERPG. Residues 787 to 807 form a helical membrane-spanning segment; the sequence is LLLLIAFFVAQLIATLIATYA. Topologically, residues 808–815 are extracellular; sequence HWEFARIK. The chain crosses the membrane as a helical span at residues 816–836; it reads GCGWGWCGVIWIYSIVTYIPL. Over 837-949 the chain is Cytoplasmic; it reads DILKFITRYT…IDNLNQHYTV (113 aa). Thr883 bears the Phosphothreonine mark. Ser931 bears the Phosphoserine mark. The interaction with 14-3-3 proteins stretch occupies residues 947–949; that stretch reads YTV. The residue at position 948 (Thr948) is a Phosphothreonine.

Belongs to the cation transport ATPase (P-type) (TC 3.A.3) family. Type IIIA subfamily. Binds to 14-3-3 proteins. The binding is induced by phosphorylation of Thr-948. Binding to 14-3-3 proteins activates the H(+)-ATPase. Expressed in guard cells.

The protein localises to the membrane. The catalysed reaction is ATP + H2O + H(+)(in) = ADP + phosphate + 2 H(+)(out). In terms of biological role, the plasma membrane H(+) ATPase of plants and fungi generates a proton gradient that drives the active transport of nutrients by H(+)-symport. The resulting external acidification and/or internal alkinization may mediate growth responses. In Arabidopsis thaliana (Mouse-ear cress), this protein is ATPase 6, plasma membrane-type (AHA6).